A 324-amino-acid polypeptide reads, in one-letter code: Glycerol-3-phosphate dehydrogenase [NAD(P)+] (324 aa).

Residues Phe-11, Arg-31, and Lys-107 each coordinate NADPH. 2 residues coordinate sn-glycerol 3-phosphate: Lys-107 and Gly-135. Position 139 (Ala-139) interacts with NADPH. Sn-glycerol 3-phosphate is bound by residues Lys-190, Asp-245, Ser-255, Arg-256, and Asn-257. Lys-190 serves as the catalytic Proton acceptor. Arg-256 contributes to the NADPH binding site. Residues Val-278 and Glu-279 each contribute to the NADPH site.

It belongs to the NAD-dependent glycerol-3-phosphate dehydrogenase family.

It localises to the cytoplasm. It carries out the reaction sn-glycerol 3-phosphate + NAD(+) = dihydroxyacetone phosphate + NADH + H(+). The enzyme catalyses sn-glycerol 3-phosphate + NADP(+) = dihydroxyacetone phosphate + NADPH + H(+). It functions in the pathway membrane lipid metabolism; glycerophospholipid metabolism. Functionally, catalyzes the reduction of the glycolytic intermediate dihydroxyacetone phosphate (DHAP) to sn-glycerol 3-phosphate (G3P), the key precursor for phospholipid synthesis. The polypeptide is Glycerol-3-phosphate dehydrogenase [NAD(P)+] (Anaplasma phagocytophilum (strain HZ)).